A 452-amino-acid polypeptide reads, in one-letter code: L-seryl-tRNA(Sec) selenium transferase (452 aa).

Lysine 285 bears the N6-(pyridoxal phosphate)lysine mark.

It belongs to the SelA family. Requires pyridoxal 5'-phosphate as cofactor.

The protein resides in the cytoplasm. The enzyme catalyses L-seryl-tRNA(Sec) + selenophosphate + H(+) = L-selenocysteinyl-tRNA(Sec) + phosphate. It functions in the pathway aminoacyl-tRNA biosynthesis; selenocysteinyl-tRNA(Sec) biosynthesis; selenocysteinyl-tRNA(Sec) from L-seryl-tRNA(Sec) (bacterial route): step 1/1. In terms of biological role, converts seryl-tRNA(Sec) to selenocysteinyl-tRNA(Sec) required for selenoprotein biosynthesis. The protein is L-seryl-tRNA(Sec) selenium transferase of Aquifex aeolicus (strain VF5).